Consider the following 167-residue polypeptide: MAHTLQTVVLLLGTSILHPILADVNVMKDVTLGFGQALEKCREESQLTEEKMEEFFHFWSEDFKFEHRELGCAILCMSRHFNLLTDSSRMHHENTDKFIKSFPNNEVLSKHMVNLIHSCEQQHDADLDHCWRILRVAECFKRSCQEAGVAPSMELLMAEFIMESEIN.

The signal sequence occupies residues Met-1–Ala-22. Disulfide bonds link Cys-41–Cys-76, Cys-72–Cys-130, and Cys-119–Cys-139.

This sequence belongs to the PBP/GOBP family. In terms of tissue distribution, antenna.

Functionally, present in the aqueous fluid surrounding olfactory sensory dendrites and are thought to aid in the capture and transport of hydrophobic odorants into and through this fluid. This chain is General odorant-binding protein 1, found in Antheraea pernyi (Chinese oak silk moth).